Reading from the N-terminus, the 302-residue chain is MGDIRKVVFEENKLEKKLCRLVGQAIGDFGMIEDGDKVMVCVSGGKDSYAMLDILMKLRERAPIDFEIVAVNLDQKQPNFPAETLPNYLRSLGIPFHIEEQDTYSIVKRVIPEGKTTCGLCSRLRRGILYRVADELGATKIALGHHRDDILETLMLNMFYAGKLKGMPPKLRSDDGKHIVIRPLAYVPEKLLERYAIDMNFPIIPCDLCGSQPNLQRQVMKEMLRDWEKKHPGRVENLFRSMHHIVPSHLMDGEAFDFKNLEISTELSGIAARSSGDRAIDEADLDELACGTMIQGTYNPSL.

Residues 43 to 48 (SGGKDS) carry the PP-loop motif motif. [4Fe-4S] cluster-binding residues include cysteine 118, cysteine 121, and cysteine 209.

Belongs to the TtcA family. As to quaternary structure, homodimer. Requires Mg(2+) as cofactor. It depends on [4Fe-4S] cluster as a cofactor.

The protein resides in the cytoplasm. It catalyses the reaction cytidine(32) in tRNA + S-sulfanyl-L-cysteinyl-[cysteine desulfurase] + AH2 + ATP = 2-thiocytidine(32) in tRNA + L-cysteinyl-[cysteine desulfurase] + A + AMP + diphosphate + H(+). Its pathway is tRNA modification. In terms of biological role, catalyzes the ATP-dependent 2-thiolation of cytidine in position 32 of tRNA, to form 2-thiocytidine (s(2)C32). The sulfur atoms are provided by the cysteine/cysteine desulfurase (IscS) system. The sequence is that of tRNA-cytidine(32) 2-sulfurtransferase from Polynucleobacter asymbioticus (strain DSM 18221 / CIP 109841 / QLW-P1DMWA-1) (Polynucleobacter necessarius subsp. asymbioticus).